Reading from the N-terminus, the 491-residue chain is MIHWLKQLRSAFGVAFLWLVCLIYFTQGFRSFVWTAVSYQLKDRLQLSPSASQFVFSVAFFPWSIKPLYGIISDCIPIGGKKRTPYLVISTVLSLVPWLVLGLDSTSRSSSLYLMIFLTVQNLGSAMADVVIDAMIAEAVRLEKASFAGDLQSVSWFAMAVGGVCGSLLGGYALSNLKIETIFLLFTVLPALQLLSCALVEESPANNEPLPELLDSNEFEEKSLTSNDNYPDTSKSNTRRRKGQKKGKKGDSNGKSETQKKQSKSLASQWFQSLKAATFGLGRAFKQPIILRPMAWFFIAHITVPNLSTVMFYYQTEVLQLDAAFLGTARVVGWLGLMFGTFIYNRYLQDMTLRKSLLFAHIGLSVTILLDMVLVSRANVGYGVSDKTMVLFGSALGDAINQLKFMPFLILSGRLCPPGIEGTLFALFMSINNLGNTVGSFMGAGLASLLGISSGSFDNMFMGLAIQVFCTYIPVLFLFLIPKEATGVSAS.

The next 6 helical transmembrane spans lie at 14 to 34 (VAFL…SFVW), 52 to 72 (SQFV…YGII), 84 to 104 (TPYL…LGLD), 112 to 132 (LYLM…DVVI), 154 to 174 (VSWF…GYAL), and 179 to 199 (IETI…SCAL). Positions 222-262 (KSLTSNDNYPDTSKSNTRRRKGQKKGKKGDSNGKSETQKKQ) are disordered. Residues 224–236 (LTSNDNYPDTSKS) are compositionally biased toward polar residues. A compositionally biased stretch (basic residues) spans 237 to 248 (NTRRRKGQKKGK). A compositionally biased stretch (basic and acidic residues) spans 249–260 (KGDSNGKSETQK). Transmembrane regions (helical) follow at residues 294–314 (MAWF…MFYY), 323–343 (AAFL…GTFI), 356–376 (SLLF…VLVS), 389–411 (MVLF…FLIL), 437–457 (TVGS…SGSF), and 461–481 (FMGL…LFLI).

This sequence belongs to the major facilitator superfamily. Folate-biopterin transporter (TC 2.A.71) family.

The protein localises to the membrane. In terms of biological role, could mediate folate transport. The polypeptide is Probable folate-biopterin transporter 4 (Arabidopsis thaliana (Mouse-ear cress)).